The following is a 284-amino-acid chain: Gap junction beta-1 protein (284 aa).

At 1–22 (MNWTGLYTLLSGVNRHSTAIGR) the chain is on the cytoplasmic side. Residues 23 to 45 (VWLSVIFIFRIMVLVVAAESVWG) traverse the membrane as a helical segment. Topologically, residues 46–75 (DEKSSFICNTLQPGCNSVCYDHFFPISHVR) are extracellular. Residues 76-95 (LWSLQLILVSTPALLVAMHV) traverse the membrane as a helical segment. Residues 96-130 (AHQQHIEKKMLRLEGHGDPLHLEEVKRHKVHISGT) lie on the Cytoplasmic side of the membrane. A helical transmembrane segment spans residues 131–153 (LWWTYVISVVFRLLFEAAFMYVF). Residues 154–191 (YLLYPGYAMVRLVKCDAYPCPNTVDCFVSRPTEKTIFT) lie on the Extracellular side of the membrane. Residues 192-214 (VFMLAASGICIILNVAEVVYLIF) traverse the membrane as a helical segment. Residues 215 to 284 (RACARRAQRR…AEKSDRCSAC (70 aa)) lie on the Cytoplasmic side of the membrane. 4 positions are modified to phosphoserine: Ser-233, Ser-259, Ser-267, and Ser-278.

This sequence belongs to the connexin family. Beta-type (group I) subfamily. In terms of assembly, a connexon is composed of a hexamer of connexins. Interacts with CNST.

It localises to the cell membrane. The protein resides in the cell junction. Its subcellular location is the gap junction. One gap junction consists of a cluster of closely packed pairs of transmembrane channels, the connexons, through which materials of low MW diffuse from one cell to a neighboring cell. In Bos taurus (Bovine), this protein is Gap junction beta-1 protein (GJB1).